We begin with the raw amino-acid sequence, 852 residues long: Replication factor C small subunit (852 aa).

Positions 183-306 (WLGYFMGSGY…IAYALASFGI (124 aa)) constitute a DOD-type homing endonuclease domain.

Belongs to the activator 1 small subunits family. RfcS subfamily. Heteromultimer composed of three to four small subunits (RfcS) and one to two large subunits (RfcL). In terms of processing, this protein undergoes a protein self splicing that involves a post-translational excision of the intervening region (intein) followed by peptide ligation.

Part of the RFC clamp loader complex which loads the PCNA sliding clamp onto DNA. The complex possesses DNA-dependent ATPase activity which is further stimulated by PCNA. The polypeptide is Replication factor C small subunit (rfcS) (Pyrococcus furiosus (strain ATCC 43587 / DSM 3638 / JCM 8422 / Vc1)).